A 393-amino-acid chain; its full sequence is Elongation factor Tu (393 aa).

Residues 10-203 (KPHVNIGTIG…AVDNYIPEPV (194 aa)) form the tr-type G domain. A G1 region spans residues 19–26 (GHVDHGKT). A GTP-binding site is contributed by 19–26 (GHVDHGKT). Thr26 contributes to the Mg(2+) binding site. Residues 60–64 (GITIS) are G2. The segment at 81–84 (DCPG) is G3. Residues 81 to 85 (DCPGH) and 136 to 139 (NKVD) contribute to the GTP site. A G4 region spans residues 136–139 (NKVD). Residues 173 to 175 (SAL) form a G5 region.

The protein belongs to the TRAFAC class translation factor GTPase superfamily. Classic translation factor GTPase family. EF-Tu/EF-1A subfamily. As to quaternary structure, monomer.

It is found in the cytoplasm. The enzyme catalyses GTP + H2O = GDP + phosphate + H(+). Its function is as follows. GTP hydrolase that promotes the GTP-dependent binding of aminoacyl-tRNA to the A-site of ribosomes during protein biosynthesis. This is Elongation factor Tu from Chlorobium phaeovibrioides (strain DSM 265 / 1930) (Prosthecochloris vibrioformis (strain DSM 265)).